Consider the following 719-residue polypeptide: T-cell immunomodulatory protein homolog (719 aa).

The first 32 residues, 1–32 (MYNFLSCKKKSIILQVLLIICTYNILLNFVNI), serve as a signal peptide directing secretion. The Extracellular segment spans residues 33–677 (FVNNNEKNHK…LSVNPSKKFY (645 aa)). 5 N-linked (GlcNAc...) asparagine glycosylation sites follow: Asn-144, Asn-277, Asn-410, Asn-540, and Asn-659. The helical transmembrane segment at 678 to 697 (SILYITLICLSVIGVLIFIL) threads the bilayer. Residues 698 to 719 (DRKEKVEDSKEELGFKSHFVIG) lie on the Cytoplasmic side of the membrane.

Belongs to the TIP family.

It localises to the membrane. Functionally, may protect the parasite against attack by the host immune system by immunomodulation. In Plasmodium falciparum (isolate 3D7), this protein is T-cell immunomodulatory protein homolog.